Consider the following 294-residue polypeptide: NAD kinase (294 aa).

Aspartate 73 (proton acceptor) is an active-site residue. Residues 73 to 74, 147 to 148, histidine 158, arginine 175, aspartate 177, 188 to 193, and glutamine 249 each bind NAD(+); these read DG, NE, and TAYSLS.

It belongs to the NAD kinase family. Requires a divalent metal cation as cofactor.

It localises to the cytoplasm. The catalysed reaction is NAD(+) + ATP = ADP + NADP(+) + H(+). Its function is as follows. Involved in the regulation of the intracellular balance of NAD and NADP, and is a key enzyme in the biosynthesis of NADP. Catalyzes specifically the phosphorylation on 2'-hydroxyl of the adenosine moiety of NAD to yield NADP. The polypeptide is NAD kinase (Aeromonas salmonicida (strain A449)).